A 306-amino-acid polypeptide reads, in one-letter code: tRNA pseudouridine synthase B (306 aa).

The active-site Nucleophile is D48.

Belongs to the pseudouridine synthase TruB family. Type 1 subfamily.

The catalysed reaction is uridine(55) in tRNA = pseudouridine(55) in tRNA. Functionally, responsible for synthesis of pseudouridine from uracil-55 in the psi GC loop of transfer RNAs. The polypeptide is tRNA pseudouridine synthase B (Chromobacterium violaceum (strain ATCC 12472 / DSM 30191 / JCM 1249 / CCUG 213 / NBRC 12614 / NCIMB 9131 / NCTC 9757 / MK)).